Consider the following 70-residue polypeptide: Homeobox protein OTX2 (70 aa).

Residues 34 to 70 (HQLPGPGATLSPMGTNAVTSHLNQSPASLSTQGYGAS) form a disordered region. The segment covering 45-70 (PMGTNAVTSHLNQSPASLSTQGYGAS) has biased composition (polar residues).

It belongs to the paired homeobox family. Bicoid subfamily.

The protein resides in the nucleus. In terms of biological role, transcription factor probably involved in the development of the brain and the sense organs. Can bind to the bicoid/BCD target sequence (BTS): 5'-TCTAATCCC-3'. The protein is Homeobox protein OTX2 (Otx2) of Rattus norvegicus (Rat).